The primary structure comprises 1597 residues: Mitogen-activated protein kinase kinase kinase 4 (1597 aa).

2 disordered regions span residues 1-128 (MRDA…VETV) and 424-465 (SPRP…PRVP). Acidic residues predominate over residues 59–69 (SDPEDFSDETN). Phosphoserine is present on Ser77. The span at 84–94 (QMKRLSAKHQR) shows a compositional bias: basic residues. Ser424 carries the post-translational modification Phosphoserine. Thr440 bears the Phosphothreonine mark. Phosphoserine is present on Ser449. Positions 449–458 (SGTEESDEEP) are enriched in acidic residues. Phosphothreonine is present on Thr451. Phosphoserine occurs at positions 454 and 492. 3 disordered regions span residues 1137-1157 (RPVK…IIPT), 1190-1220 (AAGR…SVPE), and 1233-1263 (FRSL…TRRS). Over residues 1210-1219 (APDTRGSSVP) the composition is skewed to polar residues. Phosphoserine occurs at positions 1241 and 1263. The span at 1241-1250 (SPTEERDEPA) shows a compositional bias: basic and acidic residues. The 259-residue stretch at 1332 to 1590 (WQRGNKIGEG…ASQLLDHAFV (259 aa)) folds into the Protein kinase domain. Residues 1338 to 1346 (IGEGQYGKV) and Lys1361 each bind ATP. Catalysis depends on Asp1452, which acts as the Proton acceptor.

The protein belongs to the protein kinase superfamily. STE Ser/Thr protein kinase family. MAP kinase kinase kinase subfamily. As to quaternary structure, monomer and homodimer. Homodimerization enhances kinase activity. Interacts with CDC42. Interacts with TRAF4; this promotes homodimerization. Binds both upstream activators and downstream substrates in multimolecular complexes. Interacts with AXIN1 and DIXDC1; interaction with DIXDC1 prevents interaction with AXIN1. Interacts with GADD45 and MAP2K6. Interacts with ZFP36; this interaction enhances the association with SH3KBP1/CIN85. Interacts with SH3KBP1; this interaction enhances the association with ZFP36. The cofactor is Mg(2+). In terms of tissue distribution, widely expressed. High expression was found in skeletal muscle, kidney, testis followed by heart brain and lung. Low expression was found in spleen.

It is found in the cytoplasm. Its subcellular location is the perinuclear region. The enzyme catalyses L-seryl-[protein] + ATP = O-phospho-L-seryl-[protein] + ADP + H(+). It carries out the reaction L-threonyl-[protein] + ATP = O-phospho-L-threonyl-[protein] + ADP + H(+). Its activity is regulated as follows. N-terminal autoinhibitory domain interacts with the C-terminal kinase domain, inhibiting kinase activity, and preventing interaction with its substrate, MAP2K6. The GADD45 proteins activate the kinase by binding to the N-terminal domain. Activated by phosphorylation on Thr-1494. Its function is as follows. Component of a protein kinase signal transduction cascade. Activates the CSBP2, P38 and JNK MAPK pathways, but not the ERK pathway. Specifically phosphorylates and activates MAP2K4 and MAP2K6. In Mus musculus (Mouse), this protein is Mitogen-activated protein kinase kinase kinase 4 (Map3k4).